Consider the following 132-residue polypeptide: MVMTDPIADMLTRIRNANMVRHEKLEIPASKLKREIAEILKREGFIRDVEFVEDSKQGIIRVFLKYGQNNERVITGLKRISKPGLRVYAKSNEVPRVLNGLGIAIISTSQGVLTDKEARAKQAGGEVLAYVW.

Belongs to the universal ribosomal protein uS8 family. As to quaternary structure, part of the 30S ribosomal subunit. Contacts proteins S5 and S12.

Functionally, one of the primary rRNA binding proteins, it binds directly to 16S rRNA central domain where it helps coordinate assembly of the platform of the 30S subunit. The protein is Small ribosomal subunit protein uS8 of Bacillus subtilis (strain 168).